We begin with the raw amino-acid sequence, 654 residues long: Pentatricopeptide repeat-containing protein At5g61400 (654 aa).

PPR repeat units follow at residues 37–71 (SSFS…RVSK), 74–104 (DLQS…LIER), 131–161 (SIGV…MKCS), 163–197 (DSKA…GLVP), 198–232 (DVHI…GIKP), 233–267 (NVYI…GVLP), 268–302 (NLYT…ELLP), 303–337 (NVVV…GVDP), 338–372 (NLYV…NLSP), 373–407 (DVFT…RIFP), 408–442 (SSAT…GVEP), 443–477 (NIIT…GIVP), 478–512 (DVVT…GIHP), 513–543 (NDHT…NNQQ), 548–582 (NHVG…GITP), and 583–617 (DICS…GILP).

Belongs to the PPR family. P subfamily.

The chain is Pentatricopeptide repeat-containing protein At5g61400 from Arabidopsis thaliana (Mouse-ear cress).